A 79-amino-acid polypeptide reads, in one-letter code: Serine protease inhibitor Kazal-type 1 (79 aa).

Positions 1–18 are cleaved as a signal peptide; the sequence is MKVAIIFLLSALALLSLA. Residues 26–79 enclose the Kazal-like domain; the sequence is NGKTPNCPKQIMGCPRIYDPVCGTNGITYPSECSLCFENRKFGTSIHIQRRGTC. Disulfide bonds link Cys-32-Cys-61, Cys-39-Cys-58, and Cys-47-Cys-79.

The protein resides in the secreted. Its function is as follows. Serine protease inhibitor which exhibits anti-trypsin activity. In the pancreas, protects against trypsin-catalyzed premature activation of zymogens. In the male reproductive tract, binds to sperm heads where it modulates sperm capacitance by inhibiting calcium uptake and nitrogen oxide (NO) production. This chain is Serine protease inhibitor Kazal-type 1, found in Rattus norvegicus (Rat).